Here is a 213-residue protein sequence, read N- to C-terminus: 3-isopropylmalate dehydratase small subunit (213 aa).

This sequence belongs to the LeuD family. LeuD type 1 subfamily. As to quaternary structure, heterodimer of LeuC and LeuD.

It carries out the reaction (2R,3S)-3-isopropylmalate = (2S)-2-isopropylmalate. The protein operates within amino-acid biosynthesis; L-leucine biosynthesis; L-leucine from 3-methyl-2-oxobutanoate: step 2/4. In terms of biological role, catalyzes the isomerization between 2-isopropylmalate and 3-isopropylmalate, via the formation of 2-isopropylmaleate. The protein is 3-isopropylmalate dehydratase small subunit of Pseudomonas syringae pv. syringae (strain B728a).